The primary structure comprises 98 residues: Cystatin-B (98 aa).

Methionine 1 carries the post-translational modification N-acetylmethionine. Positions 46 to 50 (QLVAG) match the Secondary area of contact motif.

It belongs to the cystatin family. As to quaternary structure, able to form dimers stabilized by noncovalent forces.

The protein localises to the cytoplasm. Functionally, this is an intracellular thiol proteinase inhibitor. This is Cystatin-B (CSTB) from Bos taurus (Bovine).